A 244-amino-acid chain; its full sequence is Small ribosomal subunit protein eS4 (244 aa).

Positions 43 to 106 constitute an S4 RNA-binding domain; sequence LPLLLVVRDV…DETYLVLFDE (64 aa).

The protein belongs to the eukaryotic ribosomal protein eS4 family.

The protein is Small ribosomal subunit protein eS4 of Methanococcus maripaludis (strain DSM 14266 / JCM 13030 / NBRC 101832 / S2 / LL).